Consider the following 146-residue polypeptide: DNA-directed RNA polymerases II, IV and V subunit 8B (146 aa).

This sequence belongs to the eukaryotic RPB8 RNA polymerase subunit family. Component of the RNA polymerase II, IV and V complexes. Associates with the mediator complex.

The protein resides in the nucleus. In terms of biological role, DNA-dependent RNA polymerase catalyzes the transcription of DNA into RNA using the four ribonucleoside triphosphates as substrates. Component of RNA polymerase II which synthesizes mRNA precursors and many functional non-coding RNAs. Pol II is the central component of the basal RNA polymerase II transcription machinery. It is composed of mobile elements that move relative to each other. Component of RNA polymerases IV and V which mediate short-interfering RNAs (siRNA) accumulation and subsequent RNA-directed DNA methylation-dependent (RdDM) transcriptional gene silencing (TGS) of endogenous repeated sequences, including transposable elements. This Arabidopsis thaliana (Mouse-ear cress) protein is DNA-directed RNA polymerases II, IV and V subunit 8B (NRPB8B).